Consider the following 87-residue polypeptide: uncharacterized protein (87 aa).

The protein to H.pylori HP0495/JHP0447.

This is an uncharacterized protein from Campylobacter jejuni subsp. jejuni serotype O:2 (strain ATCC 700819 / NCTC 11168).